Here is a 138-residue protein sequence, read N- to C-terminus: Small ribosomal subunit protein uS11c (138 aa).

This sequence belongs to the universal ribosomal protein uS11 family. In terms of assembly, part of the 30S ribosomal subunit.

Its subcellular location is the plastid. The sequence is that of Small ribosomal subunit protein uS11c from Cuscuta obtusiflora (Peruvian dodder).